We begin with the raw amino-acid sequence, 480 residues long: Cobyric acid synthase (480 aa).

One can recognise a GATase cobBQ-type domain in the interval 246 to 434 (KILIAVPILP…VHGLFSELAQ (189 aa)). The active-site Nucleophile is Cys328. The active site involves His426.

It belongs to the CobB/CobQ family. CobQ subfamily.

Its pathway is cofactor biosynthesis; adenosylcobalamin biosynthesis. In terms of biological role, catalyzes amidations at positions B, D, E, and G on adenosylcobyrinic A,C-diamide. NH(2) groups are provided by glutamine, and one molecule of ATP is hydrogenolyzed for each amidation. This Methylocella silvestris (strain DSM 15510 / CIP 108128 / LMG 27833 / NCIMB 13906 / BL2) protein is Cobyric acid synthase.